We begin with the raw amino-acid sequence, 347 residues long: GMP reductase (347 aa).

108 to 131 serves as a coordination point for NADP(+); that stretch reads ADFQKTKDIMALTDDLIFICIDIA. 2 residues coordinate K(+): Gly-181 and Gly-183. Catalysis depends on Cys-186, which acts as the Thioimidate intermediate. 216–239 provides a ligand contact to NADP(+); it reads IIGDGGCSCAGDVSKAFGGGADFV.

It belongs to the IMPDH/GMPR family. GuaC type 1 subfamily. As to quaternary structure, homotetramer.

The catalysed reaction is IMP + NH4(+) + NADP(+) = GMP + NADPH + 2 H(+). In terms of biological role, catalyzes the irreversible NADPH-dependent deamination of GMP to IMP. It functions in the conversion of nucleobase, nucleoside and nucleotide derivatives of G to A nucleotides, and in maintaining the intracellular balance of A and G nucleotides. In Aliivibrio fischeri (strain ATCC 700601 / ES114) (Vibrio fischeri), this protein is GMP reductase.